Here is a 112-residue protein sequence, read N- to C-terminus: Large ribosomal subunit protein bL17 (112 aa).

Belongs to the bacterial ribosomal protein bL17 family. As to quaternary structure, part of the 50S ribosomal subunit. Contacts protein L32.

This is Large ribosomal subunit protein bL17 from Desulfitobacterium hafniense (strain DSM 10664 / DCB-2).